We begin with the raw amino-acid sequence, 796 residues long: Protocadherin beta-3 (796 aa).

A signal peptide spans 1–26; that stretch reads MEAGGERFLRQRQVLLLFVFLGGSLA. Residues 27–690 are Extracellular-facing; the sequence is GSESRRYSVA…AQADLLTVYL (664 aa). Cadherin domains follow at residues 35–133, 138–242, 247–347, 352–451, and 456–561; these read VAEE…SPVF, MHLK…APEF, YEVA…PPEL, VNSP…APAF, and YTLF…SPFV. The N-linked (GlcNAc...) asparagine glycan is linked to Asn-169. N-linked (GlcNAc...) asparagine glycosylation is found at Asn-418 and Asn-436. A glycan (N-linked (GlcNAc...) asparagine) is linked at Asn-567. The Cadherin 6 domain occupies 568-671; it reads GSAPCTELVP…LVDGFSQPYL (104 aa). Residues 691 to 711 traverse the membrane as a helical segment; it reads VVALASVSSLFLFSVLLFVAV. Residues 712 to 796 are Cytoplasmic-facing; it reads RLCRRSRAAS…PSFRKSFEFS (85 aa).

The protein localises to the cell membrane. Its function is as follows. Potential calcium-dependent cell-adhesion protein. May be involved in the establishment and maintenance of specific neuronal connections in the brain. The protein is Protocadherin beta-3 (PCDHB3) of Homo sapiens (Human).